The chain runs to 660 residues: uncharacterized protein (660 aa).

The segment at 220-239 is disordered; sequence ADARGQAAAPPQAQAPAPPD. Positions 222 to 239 are enriched in low complexity; that stretch reads ARGQAAAPPQAQAPAPPD.

This is an uncharacterized protein from Callospermophilus lateralis (Golden-mantled ground squirrel).